Reading from the N-terminus, the 245-residue chain is Ubiquinone/menaquinone biosynthesis C-methyltransferase UbiE (245 aa).

S-adenosyl-L-methionine-binding positions include threonine 71, aspartate 92, and 118–119 (DA).

The protein belongs to the class I-like SAM-binding methyltransferase superfamily. MenG/UbiE family.

The catalysed reaction is a 2-demethylmenaquinol + S-adenosyl-L-methionine = a menaquinol + S-adenosyl-L-homocysteine + H(+). It carries out the reaction a 2-methoxy-6-(all-trans-polyprenyl)benzene-1,4-diol + S-adenosyl-L-methionine = a 5-methoxy-2-methyl-3-(all-trans-polyprenyl)benzene-1,4-diol + S-adenosyl-L-homocysteine + H(+). The protein operates within quinol/quinone metabolism; menaquinone biosynthesis; menaquinol from 1,4-dihydroxy-2-naphthoate: step 2/2. It functions in the pathway cofactor biosynthesis; ubiquinone biosynthesis. Its function is as follows. Methyltransferase required for the conversion of demethylmenaquinol (DMKH2) to menaquinol (MKH2) and the conversion of 2-polyprenyl-6-methoxy-1,4-benzoquinol (DDMQH2) to 2-polyprenyl-3-methyl-6-methoxy-1,4-benzoquinol (DMQH2). This chain is Ubiquinone/menaquinone biosynthesis C-methyltransferase UbiE, found in Neisseria meningitidis serogroup B (strain ATCC BAA-335 / MC58).